The following is a 476-amino-acid chain: Surface membrane glycoprotein GP46/M-2 (476 aa).

Positions 1–32 (MAQCVRRLVLAAPLAAVVALLLCTSSAPVARA) are cleaved as a signal peptide. Tandem repeats lie at residues 107–130 (VMIL…PSWS), 131–154 (SMKH…PEWS), 155–178 (EMTS…TSWS), and 179–202 (SMPK…DSWR). The 4 X 24 AA tandem repeats stretch occupies residues 107–202 (VMILALDFGA…FCGCVPDSWR (96 aa)). Disordered regions lie at residues 231-255 (APGT…PSPG) and 348-370 (ALSP…RRRA). Residue cysteine 452 is the site of GPI-anchor amidated cysteine attachment. The propeptide at 453-476 (PALFDGARLRCCALVVCAGAAPAG) is removed in mature form.

It localises to the cell membrane. This Leishmania amazonensis protein is Surface membrane glycoprotein GP46/M-2.